Here is a 672-residue protein sequence, read N- to C-terminus: DNA ligase (672 aa).

NAD(+) contacts are provided by residues 30–34 (DAVYD), 79–80 (SL), and Glu110. The active-site N6-AMP-lysine intermediate is the Lys112. NAD(+) contacts are provided by Arg133, Glu170, Lys287, and Lys311. Positions 405, 408, 423, and 429 each coordinate Zn(2+). Residues 590 to 672 (ADELPLSGKT…IALLTEHGAI (83 aa)) form the BRCT domain.

It belongs to the NAD-dependent DNA ligase family. LigA subfamily. Mg(2+) is required as a cofactor. Requires Mn(2+) as cofactor.

The catalysed reaction is NAD(+) + (deoxyribonucleotide)n-3'-hydroxyl + 5'-phospho-(deoxyribonucleotide)m = (deoxyribonucleotide)n+m + AMP + beta-nicotinamide D-nucleotide.. DNA ligase that catalyzes the formation of phosphodiester linkages between 5'-phosphoryl and 3'-hydroxyl groups in double-stranded DNA using NAD as a coenzyme and as the energy source for the reaction. It is essential for DNA replication and repair of damaged DNA. The chain is DNA ligase from Marinomonas sp. (strain MWYL1).